Here is an 885-residue protein sequence, read N- to C-terminus: Translation initiation factor IF-2 (885 aa).

2 disordered regions span residues 55–150 and 269–300; these read IPDK…ADVT and NTIN…EAVT. Residues 65–146 show a composition bias toward basic and acidic residues; the sequence is EPKAKKEPKK…AEAPKPKESL (82 aa). The span at 281–290 shows a compositional bias: basic residues; it reads RRARKKHKKP. The tr-type G domain maps to 384–553; the sequence is PRAPVITIMG…LLQADLLELK (170 aa). Residues 393–400 are G1; that stretch reads GHVDHGKT. GTP is bound at residue 393-400; it reads GHVDHGKT. Residues 418 to 422 form a G2 region; it reads GITQH. The segment at 439 to 442 is G3; it reads DTPG. GTP-binding positions include 439–443 and 493–496; these read DTPGH and NKMD. The interval 493–496 is G4; sequence NKMD. Residues 529–531 are G5; that stretch reads SAK.

This sequence belongs to the TRAFAC class translation factor GTPase superfamily. Classic translation factor GTPase family. IF-2 subfamily.

It localises to the cytoplasm. Its function is as follows. One of the essential components for the initiation of protein synthesis. Protects formylmethionyl-tRNA from spontaneous hydrolysis and promotes its binding to the 30S ribosomal subunits. Also involved in the hydrolysis of GTP during the formation of the 70S ribosomal complex. This is Translation initiation factor IF-2 from Campylobacter concisus (strain 13826).